The chain runs to 131 residues: Steroid Delta-isomerase (131 aa).

Y16 (proton donor) is an active-site residue. Catalysis depends on D40, which acts as the Proton acceptor. D103 contributes to the substrate binding site.

In terms of assembly, homodimer.

It catalyses the reaction a 3-oxo-Delta(5)-steroid = a 3-oxo-Delta(4)-steroid. The polypeptide is Steroid Delta-isomerase (ksi) (Pseudomonas putida (Arthrobacter siderocapsulatus)).